The sequence spans 479 residues: Anaerobic nitric oxide reductase flavorubredoxin (479 aa).

The tract at residues 30–210 is zinc metallo-hydrolase; that stretch reads LRGSSYNSYL…PFSRLVTPKI (181 aa). Fe cation is bound by residues histidine 79, glutamate 81, aspartate 83, histidine 147, aspartate 166, and histidine 227. The region spanning 254 to 393 is the Flavodoxin-like domain; it reads ITIVYDTMSN…LCREHGREIA (140 aa). FMN-binding positions include 260-264 and 342-369; these read TMSNN and AFGS…EMSL. The Rubredoxin-like domain maps to 423–474; it reads GPRMQCSVCQWIYDPAKGEPMQDVAPGTPWSEVPDNFLCPECSLGKDVFDEL. Residues cysteine 428, cysteine 431, cysteine 461, and cysteine 464 each contribute to the Fe cation site.

The protein in the N-terminal section; belongs to the zinc metallo-hydrolase group 3 family. As to quaternary structure, homotetramer. Fe cation is required as a cofactor. It depends on FMN as a cofactor.

The protein resides in the cytoplasm. It functions in the pathway nitrogen metabolism; nitric oxide reduction. Functionally, anaerobic nitric oxide reductase; uses NADH to detoxify nitric oxide (NO), protecting several 4Fe-4S NO-sensitive enzymes. Has at least 2 reductase partners, only one of which (NorW, flavorubredoxin reductase) has been identified. NO probably binds to the di-iron center; electrons enter from the NorW at rubredoxin and are transferred sequentially to the FMN center and the di-iron center. Also able to function as an aerobic oxygen reductase. The protein is Anaerobic nitric oxide reductase flavorubredoxin of Escherichia coli (strain UTI89 / UPEC).